We begin with the raw amino-acid sequence, 347 residues long: Selenide, water dikinase (347 aa).

C17 is an active-site residue. Residues K20 and 48 to 50 (TRD) contribute to the ATP site. D51 provides a ligand contact to Mg(2+). ATP-binding positions include D68, D91, and 139 to 141 (GHS). D91 is a Mg(2+) binding site. D227 serves as a coordination point for Mg(2+).

It belongs to the selenophosphate synthase 1 family. Class I subfamily. As to quaternary structure, homodimer. Mg(2+) is required as a cofactor.

The enzyme catalyses hydrogenselenide + ATP + H2O = selenophosphate + AMP + phosphate + 2 H(+). Functionally, synthesizes selenophosphate from selenide and ATP. This is Selenide, water dikinase from Salmonella typhimurium (strain LT2 / SGSC1412 / ATCC 700720).